We begin with the raw amino-acid sequence, 497 residues long: MHLLPLTVSATAVVSAASSPHAKRAAIDECLKNAKVPVTARNSTEWKTDASPFNDRLPYTPAAIAKPATVEHIQAAVLCAAEVGVKANPKSGGHSYASFGLGGEDGHLVVELDRMYNVTLDPETHIATVQPGARLGHIATVLYEEGKRAFSHGTCPGVGVGGHSLHGGFGFSSHSHGLAVDWITSADVVLANGSLVTASETENPDLFWALRGAGSNFGIVASFRFKTFAAPPNVTSYEINLPWTNSSNVVKGWGALQEWLLNGGMPEEMNMRVLGNAFQTQLQGLYHGNASALKTAIQPLLALLDANLSSVQEHDWMEGFRHYAYSGEIDITDPGYDQSETFYSKSLVTSALPPDVLERVAEYWIETANKVRRSWYIIIDMYGGPNSAVTRVPPGAGSYAFRDPERHLFLYELYDRSFGPYPDDGFAFLDGWVHAFTGGLDSSDWGMYINYADPGLDRAEAQEVYYRQNLDRLRRIKQQLDPTELFYYPQAVEPAEV.

A signal peptide spans 1–16; it reads MHLLPLTVSATAVVSA. Residues cysteine 30 and cysteine 79 are joined by a disulfide bond. N-linked (GlcNAc...) asparagine glycosylation is found at asparagine 42 and asparagine 117. Residues 57–230 enclose the FAD-binding PCMH-type domain; that stretch reads LPYTPAAIAK…ASFRFKTFAA (174 aa). Residues 94–155 constitute a cross-link (6-(S-cysteinyl)-8alpha-(pros-histidyl)-FAD (His-Cys)); the sequence is HSYASFGLGG…GKRAFSHGTC (62 aa). Threonine 154 is a substrate binding site. N-linked (GlcNAc...) asparagine glycans are attached at residues asparagine 192, asparagine 233, and asparagine 245. Arginine 272 serves as a coordination point for substrate. N-linked (GlcNAc...) asparagine glycosylation is found at asparagine 289 and asparagine 307. Glutamate 412 and tyrosine 451 together coordinate substrate.

It belongs to the oxygen-dependent FAD-linked oxidoreductase family. The cofactor is FAD. Post-translationally, the FAD cofactor is bound via a bicovalent 6-S-cysteinyl, 8alpha-N1-histidyl FAD linkage.

Its subcellular location is the secreted. The enzyme catalyses D-xylobiose + O2 = D-xylobiono-1,5-lactone + H2O2. It catalyses the reaction D-xylotriose + O2 = D-xylotriono-1,5-lactone + H2O2. The catalysed reaction is D-xylotetraose + O2 = D-xylotetraono-1,5-lactone + H2O2. Catalyzes the selective oxidation of C1 hydroxyl moieties on mono-, oligo- and polysaccharides with concomitant reduction of molecular oxygen to hydrogen peroxide. This results in the formation of the corresponding lactones, which typically undergo spontaneous hydrolysis. Xylooligosaccharide oxidase is able to oxidize a variety of substrates including D-xylose, D-cellobiose, lactose and arabinose. The enzyme acts primarily on xylooligosaccharides, indicating that it prefers pentose-based oligosaccharides over hexose-based oligosaccharides. The protein is Xylooligosaccharide oxidase of Thermothelomyces thermophilus (strain ATCC 42464 / BCRC 31852 / DSM 1799) (Sporotrichum thermophile).